A 318-amino-acid polypeptide reads, in one-letter code: Ribose-phosphate pyrophosphokinase 3 (318 aa).

96-101 (RQDKKD) contributes to the ATP binding site. Mg(2+) contacts are provided by aspartate 128, histidine 130, aspartate 139, and aspartate 143. Residue histidine 130 coordinates ATP. Residues 212–227 (NDRVAILVDDMADTCV) are binding of phosphoribosylpyrophosphate.

This sequence belongs to the ribose-phosphate pyrophosphokinase family. Homodimer. The active form is probably a hexamer composed of 3 homodimers. Mg(2+) is required as a cofactor. As to expression, testis.

The catalysed reaction is D-ribose 5-phosphate + ATP = 5-phospho-alpha-D-ribose 1-diphosphate + AMP + H(+). It functions in the pathway metabolic intermediate biosynthesis; 5-phospho-alpha-D-ribose 1-diphosphate biosynthesis; 5-phospho-alpha-D-ribose 1-diphosphate from D-ribose 5-phosphate (route I): step 1/1. Its activity is regulated as follows. Activated by magnesium and inorganic phosphate. In terms of biological role, catalyzes the synthesis of phosphoribosylpyrophosphate (PRPP) that is essential for nucleotide synthesis. The protein is Ribose-phosphate pyrophosphokinase 3 (PRPS1L1) of Homo sapiens (Human).